Here is a 511-residue protein sequence, read N- to C-terminus: 2-isopropylmalate synthase (511 aa).

The 263-residue stretch at 5 to 267 (IQIFDTTLRD…ESQINLEETK (263 aa)) folds into the Pyruvate carboxyltransferase domain. Residues aspartate 14, histidine 202, histidine 204, and asparagine 238 each contribute to the Mn(2+) site. Residues 391-511 (QLDNLQLQYV…EYELKEGIRT (121 aa)) form a regulatory domain region.

The protein belongs to the alpha-IPM synthase/homocitrate synthase family. LeuA type 1 subfamily. In terms of assembly, homodimer. It depends on Mn(2+) as a cofactor.

Its subcellular location is the cytoplasm. It catalyses the reaction 3-methyl-2-oxobutanoate + acetyl-CoA + H2O = (2S)-2-isopropylmalate + CoA + H(+). The protein operates within amino-acid biosynthesis; L-leucine biosynthesis; L-leucine from 3-methyl-2-oxobutanoate: step 1/4. In terms of biological role, catalyzes the condensation of the acetyl group of acetyl-CoA with 3-methyl-2-oxobutanoate (2-ketoisovalerate) to form 3-carboxy-3-hydroxy-4-methylpentanoate (2-isopropylmalate). This is 2-isopropylmalate synthase from Staphylococcus epidermidis (strain ATCC 35984 / DSM 28319 / BCRC 17069 / CCUG 31568 / BM 3577 / RP62A).